Here is a 314-residue protein sequence, read N- to C-terminus: 4-hydroxy-3-methylbut-2-enyl diphosphate reductase (314 aa).

A [4Fe-4S] cluster-binding site is contributed by cysteine 12. (2E)-4-hydroxy-3-methylbut-2-enyl diphosphate-binding residues include histidine 41 and histidine 74. Residues histidine 41 and histidine 74 each contribute to the dimethylallyl diphosphate site. Isopentenyl diphosphate is bound by residues histidine 41 and histidine 74. A [4Fe-4S] cluster-binding site is contributed by cysteine 96. Histidine 124 is a binding site for (2E)-4-hydroxy-3-methylbut-2-enyl diphosphate. Histidine 124 contributes to the dimethylallyl diphosphate binding site. Histidine 124 provides a ligand contact to isopentenyl diphosphate. The active-site Proton donor is glutamate 126. A (2E)-4-hydroxy-3-methylbut-2-enyl diphosphate-binding site is contributed by threonine 167. A [4Fe-4S] cluster-binding site is contributed by cysteine 197. Residues serine 225, serine 226, asparagine 227, and serine 269 each coordinate (2E)-4-hydroxy-3-methylbut-2-enyl diphosphate. Residues serine 225, serine 226, asparagine 227, and serine 269 each contribute to the dimethylallyl diphosphate site. 4 residues coordinate isopentenyl diphosphate: serine 225, serine 226, asparagine 227, and serine 269.

It belongs to the IspH family. [4Fe-4S] cluster is required as a cofactor.

It catalyses the reaction isopentenyl diphosphate + 2 oxidized [2Fe-2S]-[ferredoxin] + H2O = (2E)-4-hydroxy-3-methylbut-2-enyl diphosphate + 2 reduced [2Fe-2S]-[ferredoxin] + 2 H(+). It carries out the reaction dimethylallyl diphosphate + 2 oxidized [2Fe-2S]-[ferredoxin] + H2O = (2E)-4-hydroxy-3-methylbut-2-enyl diphosphate + 2 reduced [2Fe-2S]-[ferredoxin] + 2 H(+). Its pathway is isoprenoid biosynthesis; dimethylallyl diphosphate biosynthesis; dimethylallyl diphosphate from (2E)-4-hydroxy-3-methylbutenyl diphosphate: step 1/1. It functions in the pathway isoprenoid biosynthesis; isopentenyl diphosphate biosynthesis via DXP pathway; isopentenyl diphosphate from 1-deoxy-D-xylulose 5-phosphate: step 6/6. Its function is as follows. Catalyzes the conversion of 1-hydroxy-2-methyl-2-(E)-butenyl 4-diphosphate (HMBPP) into a mixture of isopentenyl diphosphate (IPP) and dimethylallyl diphosphate (DMAPP). Acts in the terminal step of the DOXP/MEP pathway for isoprenoid precursor biosynthesis. This chain is 4-hydroxy-3-methylbut-2-enyl diphosphate reductase, found in Haemophilus influenzae (strain PittGG).